The primary structure comprises 265 residues: Ni-sirohydrochlorin a,c-diamide reductive cyclase complex, component CfbC (265 aa).

It belongs to the NifH/BchL/ChlL family. Homodimer. The Ni-sirohydrochlorin a,c-diamide reductive cyclase complex is composed of a NifH homolog component CfbC and a NifD homolog component CfbD. It depends on [4Fe-4S] cluster as a cofactor.

It catalyses the reaction Ni-sirohydrochlorin a,c-diamide + 3 AH2 + ATP + H2O = 15,17(3)-seco-F430-17(3)-acid + 3 A + ADP + phosphate. In terms of biological role, involved in the biosynthesis of the unique nickel-containing tetrapyrrole coenzyme F430, the prosthetic group of methyl-coenzyme M reductase (MCR), which plays a key role in methanogenesis and anaerobic methane oxidation. Catalyzes both the six-electron reduction of the tetrahydroporphyrin ring system and the gamma-lactamization of the c-acetamide side chain of Ni-sirohydrochlorin a,c-diamide to yield 15,17(3)-seco-F430-17(3)-acid (seco-F430), the last intermediate in the biosynthesis of the coenzyme F430. The polypeptide is Ni-sirohydrochlorin a,c-diamide reductive cyclase complex, component CfbC (Methanosarcina barkeri (strain Fusaro / DSM 804)).